A 363-amino-acid polypeptide reads, in one-letter code: Phospho-N-acetylmuramoyl-pentapeptide-transferase (363 aa).

Transmembrane regions (helical) follow at residues 3–23 (TVLI…PLYI), 55–75 (VVII…TGAL), 76–96 (PTVS…VGFL), 116–136 (LAGQ…FPAA), 158–178 (LAVF…LIIT), 190–210 (GLDG…VLIC), 237–257 (LAVV…WNAS), 261–281 (IFMG…LAIL), 286–306 (ILLV…ILQV), and 340–360 (FWII…AEWV).

It belongs to the glycosyltransferase 4 family. MraY subfamily. Mg(2+) serves as cofactor.

The protein localises to the cell membrane. The catalysed reaction is UDP-N-acetyl-alpha-D-muramoyl-L-alanyl-gamma-D-glutamyl-meso-2,6-diaminopimeloyl-D-alanyl-D-alanine + di-trans,octa-cis-undecaprenyl phosphate = di-trans,octa-cis-undecaprenyl diphospho-N-acetyl-alpha-D-muramoyl-L-alanyl-D-glutamyl-meso-2,6-diaminopimeloyl-D-alanyl-D-alanine + UMP. The protein operates within cell wall biogenesis; peptidoglycan biosynthesis. Its function is as follows. Catalyzes the initial step of the lipid cycle reactions in the biosynthesis of the cell wall peptidoglycan: transfers peptidoglycan precursor phospho-MurNAc-pentapeptide from UDP-MurNAc-pentapeptide onto the lipid carrier undecaprenyl phosphate, yielding undecaprenyl-pyrophosphoryl-MurNAc-pentapeptide, known as lipid I. The protein is Phospho-N-acetylmuramoyl-pentapeptide-transferase of Kineococcus radiotolerans (strain ATCC BAA-149 / DSM 14245 / SRS30216).